A 294-amino-acid polypeptide reads, in one-letter code: Acetylglutamate kinase (294 aa).

Substrate contacts are provided by residues 69-70 (GG), R91, and N190.

It belongs to the acetylglutamate kinase family. ArgB subfamily.

It localises to the cytoplasm. The enzyme catalyses N-acetyl-L-glutamate + ATP = N-acetyl-L-glutamyl 5-phosphate + ADP. Its pathway is amino-acid biosynthesis; L-arginine biosynthesis; N(2)-acetyl-L-ornithine from L-glutamate: step 2/4. In terms of biological role, catalyzes the ATP-dependent phosphorylation of N-acetyl-L-glutamate. The sequence is that of Acetylglutamate kinase from Mycobacterium tuberculosis (strain CDC 1551 / Oshkosh).